Consider the following 266-residue polypeptide: Streptomycin 3''-kinase (266 aa).

Asp-154 serves as the catalytic Proton acceptor.

The protein belongs to the aminoglycoside phosphotransferase family.

The enzyme catalyses streptomycin + ATP = streptomycin 3''-phosphate + ADP + H(+). Its function is as follows. The aminoglycoside phosphotransferases achieve inactivation of their antibiotic substrates by phosphorylation. The sequence is that of Streptomycin 3''-kinase (str) from Klebsiella pneumoniae.